Reading from the N-terminus, the 330-residue chain is Delta-aminolevulinic acid dehydratase (330 aa).

C122, C124, H131, and C132 together coordinate Zn(2+). K199 acts as the Schiff-base intermediate with substrate in catalysis. At K199 the chain carries N6-succinyllysine. R209 serves as a coordination point for 5-aminolevulinate. The residue at position 215 (S215) is a Phosphoserine. 5-aminolevulinate is bound at residue R221. A Zn(2+)-binding site is contributed by C223. The active-site Schiff-base intermediate with substrate is K252. An N6-succinyllysine modification is found at K252. Position 279 (S279) interacts with 5-aminolevulinate.

This sequence belongs to the ALAD family. Homooctamer; active form. Homohexamer; low activity form. Requires Zn(2+) as cofactor.

Its subcellular location is the cytoplasm. It localises to the cytosol. It carries out the reaction 2 5-aminolevulinate = porphobilinogen + 2 H2O + H(+). The protein operates within porphyrin-containing compound metabolism; protoporphyrin-IX biosynthesis; coproporphyrinogen-III from 5-aminolevulinate: step 1/4. With respect to regulation, can alternate between a fully active homooctamer and a low-activity homohexamer. A bound magnesium ion may promote the assembly of the fully active homooctamer. The magnesium-binding site is absent in the low-activity homohexamer. Inhibited by compounds that favor the hexameric state. Inhibited by divalent lead ions. The lead ions partially displace the zinc cofactor. Its function is as follows. Catalyzes an early step in the biosynthesis of tetrapyrroles. Binds two molecules of 5-aminolevulinate per subunit, each at a distinct site, and catalyzes their condensation to form porphobilinogen. The polypeptide is Delta-aminolevulinic acid dehydratase (ALAD) (Pongo abelii (Sumatran orangutan)).